The chain runs to 364 residues: Anhydro-N-acetylmuramic acid kinase (364 aa).

Position 11-18 (11-18) interacts with ATP; sequence GSSLDGID.

Belongs to the anhydro-N-acetylmuramic acid kinase family.

It carries out the reaction 1,6-anhydro-N-acetyl-beta-muramate + ATP + H2O = N-acetyl-D-muramate 6-phosphate + ADP + H(+). Its pathway is amino-sugar metabolism; 1,6-anhydro-N-acetylmuramate degradation. It functions in the pathway cell wall biogenesis; peptidoglycan recycling. Its function is as follows. Catalyzes the specific phosphorylation of 1,6-anhydro-N-acetylmuramic acid (anhMurNAc) with the simultaneous cleavage of the 1,6-anhydro ring, generating MurNAc-6-P. Is required for the utilization of anhMurNAc either imported from the medium or derived from its own cell wall murein, and thus plays a role in cell wall recycling. The sequence is that of Anhydro-N-acetylmuramic acid kinase from Pseudomonas savastanoi pv. phaseolicola (strain 1448A / Race 6) (Pseudomonas syringae pv. phaseolicola (strain 1448A / Race 6)).